The chain runs to 1419 residues: Myosin-2B (1419 aa).

Positions 4–57 (EVGTRCWYPNSEAGWIGCEVTKNDFQDGTYHIELTSETGLVIPIETKHLESNNA) constitute a Myosin N-terminal SH3-like domain. A Myosin motor domain is found at 75–780 (EATHDLTTLS…VLAYLEKIRS (706 aa)). ATP is bound at residue 169 to 176 (GESGAGKT). The tract at residues 451–531 (FIGVLDIYGF…LGILSLLDEE (81 aa)) is actin-binding. IQ domains are found at residues 783 to 805 (VTEL…LYLQ), 806 to 830 (AMLS…DFEM), 831 to 854 (KTDA…VFET), 855 to 878 (LKNI…QREF), 879 to 901 (ESRS…RYQT), and 902 to 931 (LKTG…QAES). Residues 909-940 (IQALVRRKQSQEKLKQLKIQAESAASLKNSAA) are a coiled coil. Residues 1061–1419 (KDNERTSTSS…VIKELGSLLA (359 aa)) form a non alpha-helical, tail domain region. In terms of domain architecture, Dilute spans 1143 to 1357 (HSILKQTVQD…LNHLSNTARR (215 aa)).

It belongs to the TRAFAC class myosin-kinesin ATPase superfamily. Myosin family. As to quaternary structure, homodimer. Interacts with calmodulin (CMD1) and the myosin light chain MLC1 through its IQ repeats.

Myosin heavy chain that is required for the cell cycle-regulated transport of various organelles and proteins for their segregation. Functions by binding with its tail domain to receptor proteins on organelles and exerting force with its N-terminal motor domain against actin filaments, thereby transporting its cargo along polarized actin cables. The protein is Myosin-2B (MYO2B) of Naumovozyma castellii (Yeast).